A 595-amino-acid polypeptide reads, in one-letter code: Probable translation initiation factor IF-2 (595 aa).

Residues leucine 11–leucine 225 enclose the tr-type G domain. The segment at glycine 20 to threonine 27 is G1. Glycine 20–threonine 27 is a binding site for GTP. A G2 region spans residues glycine 45–histidine 49. Positions aspartate 81–glycine 84 are G3. Residues aspartate 81 to histidine 85 and asparagine 135 to aspartate 138 each bind GTP. The tract at residues asparagine 135–aspartate 138 is G4. Positions serine 203–leucine 205 are G5.

The protein belongs to the TRAFAC class translation factor GTPase superfamily. Classic translation factor GTPase family. IF-2 subfamily.

In terms of biological role, function in general translation initiation by promoting the binding of the formylmethionine-tRNA to ribosomes. Seems to function along with eIF-2. This is Probable translation initiation factor IF-2 (infB) from Archaeoglobus fulgidus (strain ATCC 49558 / DSM 4304 / JCM 9628 / NBRC 100126 / VC-16).